A 104-amino-acid chain; its full sequence is Large ribosomal subunit protein uL24 (104 aa).

Belongs to the universal ribosomal protein uL24 family. Part of the 50S ribosomal subunit.

One of two assembly initiator proteins, it binds directly to the 5'-end of the 23S rRNA, where it nucleates assembly of the 50S subunit. In terms of biological role, one of the proteins that surrounds the polypeptide exit tunnel on the outside of the subunit. This is Large ribosomal subunit protein uL24 from Shewanella sediminis (strain HAW-EB3).